Reading from the N-terminus, the 434-residue chain is Mothers against decapentaplegic homolog 9 (434 aa).

Positions 16-140 (PAVKRLLGWK…YRRVETPVLP (125 aa)) constitute an MH1 domain. Residues Cys-68, Cys-113, Cys-125, and His-130 each contribute to the Zn(2+) site. Positions 171 to 222 (MPHNATYPDSFQQSLGPAPPSSPGHVFPQSPCPTSYPQSPGSPSESDSPYQH) are disordered. The segment covering 202–221 (CPTSYPQSPGSPSESDSPYQ) has biased composition (polar residues). An MH2 domain is found at 236-434 (WCSVAYYELN…SPHNPISSVS (199 aa)).

This sequence belongs to the dwarfin/SMAD family. In terms of assembly, interaction with the co-SMAD SMAD4. Interacts with PEBP2-alpha subunit. Interacts with RANBP3L. In terms of processing, phosphorylated on serine by BMP (bone morphogenetic proteins) type 1 receptor kinase. Phosphorylated by activin type I receptor-like kinase-2 (ALK-2).

The protein resides in the cytoplasm. It localises to the nucleus. Its function is as follows. Transcriptional modulator activated by BMP (bone morphogenetic proteins) type 1 receptor kinase. SMAD9 is a receptor-regulated SMAD (R-SMAD). Has been shown to be activated by activin type I receptor-like kinase-2 (ALK-2) which stimulates heteromerization between SMAD9 and SMAD4. ALK-2 binds TGF-beta, activin and BMP. The sequence is that of Mothers against decapentaplegic homolog 9 (Smad9) from Rattus norvegicus (Rat).